Here is a 149-residue protein sequence, read N- to C-terminus: Arginine repressor (149 aa).

Belongs to the ArgR family.

The protein resides in the cytoplasm. It functions in the pathway amino-acid biosynthesis; L-arginine biosynthesis [regulation]. Its function is as follows. Regulates arginine biosynthesis genes. The polypeptide is Arginine repressor (Halalkalibacterium halodurans (strain ATCC BAA-125 / DSM 18197 / FERM 7344 / JCM 9153 / C-125) (Bacillus halodurans)).